We begin with the raw amino-acid sequence, 186 residues long: Transcription factor HES-3 (186 aa).

The bHLH domain maps to 1 to 49 (MEKKRRARINVSLEQLKSLLEKHYSHQIRKRKLEKADILELSVKYMRSL). Positions 65–99 (QPSGFRSCLPGVSQLLRRGDEVGSGLRCPLVPESA) constitute an Orange domain. A disordered region spans residues 128–186 (APAAGGPRSPPPLLLLPESLPGSSASVPPPQPASSRCAESPGLGLRVWRPWGSPGDDLN). Residues 142–153 (LLPESLPGSSAS) show a composition bias toward low complexity. The short motif at 175–178 (WRPW) is the WRPW motif element.

As to quaternary structure, transcription repression requires formation of a complex with a corepressor protein of the Groucho/TLE family.

The protein localises to the nucleus. In terms of biological role, transcriptional repressor of genes that require a bHLH protein for their transcription. The protein is Transcription factor HES-3 (HES3) of Homo sapiens (Human).